Consider the following 524-residue polypeptide: Na(+)/H(+) antiporter NhaB (524 aa).

Helical transmembrane passes span phenylalanine 13–proline 33, leucine 98–phenylalanine 118, alanine 140–valine 160, phenylalanine 239–leucine 259, alanine 304–valine 324, glycine 325–glycine 345, leucine 358–isoleucine 378, alanine 448–isoleucine 468, and alanine 479–valine 499.

It belongs to the NhaB Na(+)/H(+) (TC 2.A.34) antiporter family.

Its subcellular location is the cell inner membrane. The catalysed reaction is 2 Na(+)(in) + 3 H(+)(out) = 2 Na(+)(out) + 3 H(+)(in). Na(+)/H(+) antiporter that extrudes sodium in exchange for external protons. The sequence is that of Na(+)/H(+) antiporter NhaB from Yersinia pseudotuberculosis serotype O:3 (strain YPIII).